A 341-amino-acid chain; its full sequence is Ketol-acid reductoisomerase (NADP(+)) (341 aa).

The 180-residue stretch at 2–181 folds into the KARI N-terminal Rossmann domain; the sequence is AKVYYNGDAN…GAARAGVLET (180 aa). NADP(+) is bound by residues 25-28, R48, S52, and 82-85; these read YGSQ and DEKQ. The active site involves H107. NADP(+) is bound at residue G133. Residues 182–327 form the KARI C-terminal knotted domain; it reads TFKEETETDL…RELRSMMPFV (146 aa). D190, E194, E226, and E230 together coordinate Mg(2+). S251 provides a ligand contact to substrate.

It belongs to the ketol-acid reductoisomerase family. It depends on Mg(2+) as a cofactor.

The enzyme catalyses (2R)-2,3-dihydroxy-3-methylbutanoate + NADP(+) = (2S)-2-acetolactate + NADPH + H(+). The catalysed reaction is (2R,3R)-2,3-dihydroxy-3-methylpentanoate + NADP(+) = (S)-2-ethyl-2-hydroxy-3-oxobutanoate + NADPH + H(+). The protein operates within amino-acid biosynthesis; L-isoleucine biosynthesis; L-isoleucine from 2-oxobutanoate: step 2/4. It participates in amino-acid biosynthesis; L-valine biosynthesis; L-valine from pyruvate: step 2/4. Functionally, involved in the biosynthesis of branched-chain amino acids (BCAA). Catalyzes an alkyl-migration followed by a ketol-acid reduction of (S)-2-acetolactate (S2AL) to yield (R)-2,3-dihydroxy-isovalerate. In the isomerase reaction, S2AL is rearranged via a Mg-dependent methyl migration to produce 3-hydroxy-3-methyl-2-ketobutyrate (HMKB). In the reductase reaction, this 2-ketoacid undergoes a metal-dependent reduction by NADPH to yield (R)-2,3-dihydroxy-isovalerate. The sequence is that of Ketol-acid reductoisomerase (NADP(+)) from Geobacillus kaustophilus (strain HTA426).